The primary structure comprises 1150 residues: Protogenin (1150 aa).

A signal peptide spans 1-35 (MAPPLRPLARLRPPGMLLRALLLLLLLSPLPGVWC). Ig-like domains are found at residues 36 to 130 (FSEL…AHLA), 135 to 222 (SAFE…ASLT), 235 to 322 (PTII…ATLT), and 327 to 411 (PSFV…ARLT). Over 36-949 (FSELSFVKEP…YYHLDQKSMT (914 aa)) the chain is Extracellular. Intrachain disulfides connect cysteine 60–cysteine 113, cysteine 156–cysteine 205, cysteine 256–cysteine 304, and cysteine 348–cysteine 395. An N-linked (GlcNAc...) asparagine glycan is attached at asparagine 90. Fibronectin type-III domains are found at residues 421–515 (APYN…TLED), 517–613 (PLRP…TPKA), 618–717 (APKS…VRDR), 724–817 (PPHH…TLPE), and 822–917 (PPVG…VLPK). An N-linked (GlcNAc...) asparagine glycan is attached at asparagine 488. Asparagine 630 is a glycosylation site (N-linked (GlcNAc...) asparagine). A helical membrane pass occupies residues 950-970 (GIAVGVGIALTCILICVLILI). The Cytoplasmic segment spans residues 971-1150 (YRSKARKSSA…SVISTTPPNL (180 aa)). Disordered regions lie at residues 981–1002 (SKTAQNGTQQLPRTSASLASGN) and 1086–1150 (ISDE…PPNL). Polar residues-rich tracts occupy residues 983–1000 (TAQNGTQQLPRTSASLAS) and 1092–1102 (PSSPGQTTSFS). Residues 1110–1138 (DTEHSANSEGSHETGDSGRFSHESNDEIH) are compositionally biased toward basic and acidic residues. Polar residues predominate over residues 1141–1150 (SVISTTPPNL).

It belongs to the immunoglobulin superfamily. DCC family.

It is found in the membrane. Functionally, may play a role in anteroposterior axis elongation. The protein is Protogenin of Homo sapiens (Human).